We begin with the raw amino-acid sequence, 120 residues long: UPF0231 protein YacL (120 aa).

Belongs to the UPF0231 family.

The protein is UPF0231 protein YacL of Escherichia coli O81 (strain ED1a).